The primary structure comprises 585 residues: Testis-specific serine kinase substrate (585 aa).

Over residues 91–108 the composition is skewed to low complexity; sequence EPDSSGTDSTTEDSGPLA. Positions 91–125 are disordered; it reads EPDSSGTDSTTEDSGPLALPGPPASPTTPWAPEDP. Ser-224 is subject to Phosphoserine. Disordered stretches follow at residues 264-312 and 559-585; these read HGLS…SEQE and LEGS…GSEQ. Phosphoserine; by TSSK1 and TSSK2 is present on Ser-281. Residue Ser-309 is modified to Phosphoserine.

Phosphorylated on serine residue(s) by STK22A/TSSK1 and STK22B/TSSK2. Testis specific.

It is found in the cytoplasm. The protein localises to the cytoskeleton. The protein resides in the microtubule organizing center. Its subcellular location is the centrosome. It localises to the centriole. It is found in the cytoplasmic vesicle. The protein localises to the secretory vesicle. The protein resides in the acrosome. In terms of biological role, may play a role in testicular physiology, most probably in the process of spermatogenesis or spermatid development. The sequence is that of Testis-specific serine kinase substrate (Tsks) from Mus musculus (Mouse).